Here is a 126-residue protein sequence, read N- to C-terminus: Major sperm protein 3 (126 aa).

Ala-2 carries the post-translational modification N-acetylalanine. The region spanning 8–125 is the MSP domain; sequence DIATMPAQKV…RRKNLPIEYN (118 aa).

Sperm.

Its subcellular location is the cell projection. It is found in the pseudopodium. The protein resides in the cytoplasm. It localises to the cytoskeleton. Central component in molecular interactions underlying sperm crawling. Forms an extensive filament system that extends from sperm villipoda, along the leading edge of the pseudopod. The protein is Major sperm protein 3 (MSP-3) of Globodera rostochiensis (Golden nematode worm).